We begin with the raw amino-acid sequence, 116 residues long: Probable non-functional immunoglobulin kappa variable 3-7 (116 aa).

Residues 1 to 21 form the signal peptide; sequence MEAPAQLLFLLLLWLPDTTRE. The interval 21-43 is framework-1; it reads EIVMTQSPPTLSLSPGERVTLSC. In terms of domain architecture, Ig-like spans 22-116; that stretch reads IVMTQSPPTL…YYCQQDYNLP (95 aa). A disulfide bond links Cys-43 and Cys-109. Residues 44-55 are complementarity-determining-1; the sequence is RASQSVSSSYLT. The tract at residues 56–70 is framework-2; it reads WYQQKPGQAPRLLIY. The segment at 71–77 is complementarity-determining-2; the sequence is GASTRAT. Positions 78 to 109 are framework-3; it reads SIPARFSGSGSGTDFTLTISSLQPEDFAVYYC. The interval 110–116 is complementarity-determining-3; the sequence is QQDYNLP.

Immunoglobulins are composed of two identical heavy chains and two identical light chains; disulfide-linked.

Its subcellular location is the secreted. The protein localises to the cell membrane. Functionally, probable non-functional open reading frame (ORF) of V region of the variable domain of immunoglobulin light chains. Non-functional ORF generally cannot participate in the synthesis of a productive immunoglobulin chain due to altered V-(D)-J or switch recombination and/or splicing site (at mRNA level) and/or conserved amino acid change (protein level). Immunoglobulins, also known as antibodies, are membrane-bound or secreted glycoproteins produced by B lymphocytes. In the recognition phase of humoral immunity, the membrane-bound immunoglobulins serve as receptors which, upon binding of a specific antigen, trigger the clonal expansion and differentiation of B lymphocytes into immunoglobulins-secreting plasma cells. Secreted immunoglobulins mediate the effector phase of humoral immunity, which results in the elimination of bound antigens. The antigen binding site is formed by the variable domain of one heavy chain, together with that of its associated light chain. Thus, each immunoglobulin has two antigen binding sites with remarkable affinity for a particular antigen. The variable domains are assembled by a process called V-(D)-J rearrangement and can then be subjected to somatic hypermutations which, after exposure to antigen and selection, allow affinity maturation for a particular antigen. The sequence is that of Probable non-functional immunoglobulin kappa variable 3-7 from Homo sapiens (Human).